A 352-amino-acid polypeptide reads, in one-letter code: Ion-translocating oxidoreductase complex subunit D (352 aa).

A run of 5 helical transmembrane segments spans residues 20-40, 42-62, 78-109, 123-143, and 148-168; these read IMLL…WFFG, GTLV…ALVL, ALLT…VIIA, PAMI…TSWL, and IAVN…GHTA. The residue at position 187 (threonine 187) is an FMN phosphoryl threonine. A run of 4 helical transmembrane segments spans residues 214 to 234, 242 to 262, 267 to 287, and 301 to 318; these read ILAG…GVWL, WHIP…GWLF, LAAP…FFIL, and LMFG…RSFG.

The protein belongs to the NqrB/RnfD family. As to quaternary structure, the complex is composed of six subunits: RsxA, RsxB, RsxC, RsxD, RsxE and RsxG. Requires FMN as cofactor.

It localises to the cell inner membrane. Its function is as follows. Part of a membrane-bound complex that couples electron transfer with translocation of ions across the membrane. Required to maintain the reduced state of SoxR. The sequence is that of Ion-translocating oxidoreductase complex subunit D from Shigella flexneri serotype 5b (strain 8401).